Reading from the N-terminus, the 177-residue chain is Shikimate kinase (177 aa).

Position 14-19 (14-19) interacts with ATP; sequence GSGKST. Serine 18 contacts Mg(2+). Positions 36, 60, and 82 each coordinate substrate. Arginine 120 contacts ATP. Residue arginine 139 coordinates substrate.

It belongs to the shikimate kinase family. As to quaternary structure, monomer. It depends on Mg(2+) as a cofactor.

It is found in the cytoplasm. The catalysed reaction is shikimate + ATP = 3-phosphoshikimate + ADP + H(+). Its pathway is metabolic intermediate biosynthesis; chorismate biosynthesis; chorismate from D-erythrose 4-phosphate and phosphoenolpyruvate: step 5/7. Its function is as follows. Catalyzes the specific phosphorylation of the 3-hydroxyl group of shikimic acid using ATP as a cosubstrate. This Gloeobacter violaceus (strain ATCC 29082 / PCC 7421) protein is Shikimate kinase.